The following is a 593-amino-acid chain: UvrABC system protein C (593 aa).

One can recognise a GIY-YIG domain in the interval 17-94; it reads MEPGCYLMKD…IKQYQPRYNI (78 aa). The 36-residue stretch at 199-234 folds into the UVR domain; it reads KTILKSLEERMLTASESLDFERAKEYRDLIQHIQNL.

It belongs to the UvrC family. Interacts with UvrB in an incision complex.

The protein resides in the cytoplasm. Functionally, the UvrABC repair system catalyzes the recognition and processing of DNA lesions. UvrC both incises the 5' and 3' sides of the lesion. The N-terminal half is responsible for the 3' incision and the C-terminal half is responsible for the 5' incision. The polypeptide is UvrABC system protein C (Staphylococcus aureus (strain Mu3 / ATCC 700698)).